The following is a 186-amino-acid chain: Ribosome rescue factor SmrB (186 aa).

In terms of domain architecture, Smr spans isoleucine 99–glutamate 174.

It belongs to the SmrB family. As to quaternary structure, associates with collided ribosomes, but not with correctly translating polysomes.

Its function is as follows. Acts as a ribosome collision sensor. Detects stalled/collided disomes (pairs of ribosomes where the leading ribosome is stalled and a second ribosome has collided with it) and endonucleolytically cleaves mRNA at the 5' boundary of the stalled ribosome. Stalled/collided disomes form a new interface (primarily via the 30S subunits) that binds SmrB. Cleaved mRNA becomes available for tmRNA ligation, leading to ribosomal subunit dissociation and rescue of stalled ribosomes. This chain is Ribosome rescue factor SmrB, found in Buchnera aphidicola subsp. Acyrthosiphon pisum (strain 5A).